The chain runs to 201 residues: FMN-dependent NADH:quinone oxidoreductase (201 aa).

FMN is bound by residues Ser-9 and 93 to 96; that span reads MYNF.

This sequence belongs to the azoreductase type 1 family. In terms of assembly, homodimer. FMN is required as a cofactor.

It carries out the reaction 2 a quinone + NADH + H(+) = 2 a 1,4-benzosemiquinone + NAD(+). It catalyses the reaction N,N-dimethyl-1,4-phenylenediamine + anthranilate + 2 NAD(+) = 2-(4-dimethylaminophenyl)diazenylbenzoate + 2 NADH + 2 H(+). Quinone reductase that provides resistance to thiol-specific stress caused by electrophilic quinones. In terms of biological role, also exhibits azoreductase activity. Catalyzes the reductive cleavage of the azo bond in aromatic azo compounds to the corresponding amines. The chain is FMN-dependent NADH:quinone oxidoreductase from Bradyrhizobium sp. (strain BTAi1 / ATCC BAA-1182).